An 822-amino-acid chain; its full sequence is Serine/threonine-protein kinase kin-29 (822 aa).

One can recognise a Protein kinase domain in the interval 16 to 267; sequence YDVGRAIGKG…IQNVLQHRWM (252 aa). ATP is bound by residues 22–30 and lysine 45; that span reads IGKGNFATV. Aspartate 138 (proton acceptor) is an active-site residue. Disordered stretches follow at residues 348-367, 389-423, and 577-602; these read EGTGEEFPRRGSRGSILSGK, LSSPDCDSDDSSNSDLCDDSPMSSMGPMNHERQFG, and NPIPRYQRTPYTKAPPAERRSSWASP. Positions 394–406 are enriched in acidic residues; that stretch reads CDSDDSSNSDLCD.

The protein belongs to the protein kinase superfamily. CAMK Ser/Thr protein kinase family. SNF1 subfamily. In terms of assembly, interacts with tax-6. Mg(2+) serves as cofactor. Post-translationally, autophosphorylated. Elevated cAMP levels appears to act via PKA to directly or indirectly phosphorylate multiple sites on kin-29 and inhibit function. In terms of tissue distribution, primarily neuronal, with additional expression in body wall muscle and hypodermal cells. Among neuronal cells, expressed in multiple sensory neurons and interneurons in the lateral, anterior, and lumbar ganglia, as well as in motor neurons in the ventral motor cord. Present in the AWB and AWC olfactory neurons.

Its subcellular location is the cytoplasm. It localises to the nucleus. The enzyme catalyses L-seryl-[protein] + ATP = O-phospho-L-seryl-[protein] + ADP + H(+). It carries out the reaction L-threonyl-[protein] + ATP = O-phospho-L-threonyl-[protein] + ADP + H(+). Its function is as follows. Regulates chemoreceptor expression by phosphorylating the hda-4 class II histone deacetylase (HDAC) and inhibiting the gene repression functions of hda-4 and the mef-2 transcription factor, enabling the correct sensing and transduction of food signals. Role in determining body size, the dauer decision and serotonin-mediated egg laying. May modulate the Sma/Mab pathway and regulates development in the later larval stages. The chain is Serine/threonine-protein kinase kin-29 from Caenorhabditis elegans.